We begin with the raw amino-acid sequence, 234 residues long: Peptidyl-tRNA hydrolase (234 aa).

Residue Tyr-14 coordinates tRNA. His-19 functions as the Proton acceptor in the catalytic mechanism. Residues Phe-64, Asn-66, and Asn-112 each coordinate tRNA. Residues 187–234 form a disordered region; sequence TGTKADEEKPKPAKSHIHQARNGVQPKKLPETGPMAEMLKKMFGPKKD.

The protein belongs to the PTH family. As to quaternary structure, monomer.

The protein localises to the cytoplasm. The enzyme catalyses an N-acyl-L-alpha-aminoacyl-tRNA + H2O = an N-acyl-L-amino acid + a tRNA + H(+). In terms of biological role, hydrolyzes ribosome-free peptidyl-tRNAs (with 1 or more amino acids incorporated), which drop off the ribosome during protein synthesis, or as a result of ribosome stalling. Catalyzes the release of premature peptidyl moieties from peptidyl-tRNA molecules trapped in stalled 50S ribosomal subunits, and thus maintains levels of free tRNAs and 50S ribosomes. The protein is Peptidyl-tRNA hydrolase of Allorhizobium ampelinum (strain ATCC BAA-846 / DSM 112012 / S4) (Agrobacterium vitis (strain S4)).